The sequence spans 298 residues: tRNA pseudouridine synthase B (298 aa).

The active-site Nucleophile is the aspartate 46.

Belongs to the pseudouridine synthase TruB family. Type 1 subfamily.

The catalysed reaction is uridine(55) in tRNA = pseudouridine(55) in tRNA. Its function is as follows. Responsible for synthesis of pseudouridine from uracil-55 in the psi GC loop of transfer RNAs. This Paracoccus denitrificans (strain Pd 1222) protein is tRNA pseudouridine synthase B.